A 183-amino-acid polypeptide reads, in one-letter code: Ribosome-recycling factor (183 aa).

This sequence belongs to the RRF family.

The protein resides in the cytoplasm. In terms of biological role, responsible for the release of ribosomes from messenger RNA at the termination of protein biosynthesis. May increase the efficiency of translation by recycling ribosomes from one round of translation to another. The polypeptide is Ribosome-recycling factor (Deinococcus deserti (strain DSM 17065 / CIP 109153 / LMG 22923 / VCD115)).